We begin with the raw amino-acid sequence, 1261 residues long: Structural maintenance of chromosomes protein 3 (1261 aa).

Coiled coils occupy residues 188–332 (EKIQ…HSLQ) and 406–450 (LIAD…YEMD). The region spanning 534–645 (NGYYGTVIEL…IIVRTLDQAA (112 aa)) is the SMC hinge domain. Coiled coils occupy residues 677 to 826 (KRSK…MDLM), 857 to 930 (NERR…DKIT), and 1023 to 1085 (RELE…ENRK). The short motif at 1159–1193 (LSGGQKSLVALAIIFSIQKCDPAPFYLFDEIDAAL) is the DA-box element.

The protein belongs to the SMC family. SMC3 subfamily. Component of the cohesin complex, composed of the smc-1 and smc-3 heterodimer attached via their SMC hinge domain, scc-1 which links them, and scc-3. Interacts with scc-1, smc-1 and tim-1.

It localises to the nucleus. The protein resides in the chromosome. Its function is as follows. Involved in chromosome cohesion during cell cycle and in DNA repair. Involved in the repair of double strand breaks during mitosis and meiosis. Required for chromosome segregation during mitosis. Central component of cohesin complex. The cohesin complex is required for the cohesion of sister chromatids after DNA replication. The cohesin complex apparently forms a large proteinaceous ring within which sister chromatids can be trapped. At anaphase, the complex is cleaved and dissociates from chromatin, allowing sister chromatids to segregate. Required for the localization of lab-1 to meiotic and mitotic chromosomes. In Caenorhabditis elegans, this protein is Structural maintenance of chromosomes protein 3.